The sequence spans 688 residues: Acyl-CoA synthetase short-chain family member B, mitochondrial (688 aa).

It belongs to the ATP-dependent AMP-binding enzyme family.

It localises to the mitochondrion. It carries out the reaction acetate + ATP + CoA = acetyl-CoA + AMP + diphosphate. Its function is as follows. Activates acetate so that it can be used for lipid synthesis or for energy generation. The chain is Acyl-CoA synthetase short-chain family member B, mitochondrial (aslB) from Dictyostelium discoideum (Social amoeba).